Here is a 118-residue protein sequence, read N- to C-terminus: Basic phospholipase A2 PA-9C (118 aa).

Intrachain disulfides connect C11–C71, C27–C117, C29–C45, C44–C98, C51–C91, C60–C84, and C78–C89. Ca(2+)-binding residues include Y28, G30, and G32. Residue H48 is part of the active site. Ca(2+) is bound at residue D49. Residue D92 is part of the active site.

The protein belongs to the phospholipase A2 family. Group I subfamily. D49 sub-subfamily. It depends on Ca(2+) as a cofactor. As to expression, expressed by the venom gland.

It localises to the secreted. The catalysed reaction is a 1,2-diacyl-sn-glycero-3-phosphocholine + H2O = a 1-acyl-sn-glycero-3-phosphocholine + a fatty acid + H(+). Functionally, PLA2 catalyzes the calcium-dependent hydrolysis of the 2-acyl groups in 3-sn-phosphoglycerides. In Pseudechis australis (Mulga snake), this protein is Basic phospholipase A2 PA-9C.